Reading from the N-terminus, the 348-residue chain is Selenide, water dikinase (348 aa).

Residue cysteine 17 is part of the active site. Residues lysine 20 and 48 to 50 (TSD) contribute to the ATP site. Aspartate 51 contributes to the Mg(2+) binding site. ATP is bound by residues aspartate 68, aspartate 91, and 139–141 (GHT). Aspartate 91 is a Mg(2+) binding site. A Mg(2+)-binding site is contributed by aspartate 227.

Belongs to the selenophosphate synthase 1 family. Class I subfamily. As to quaternary structure, homodimer. Mg(2+) serves as cofactor.

It carries out the reaction hydrogenselenide + ATP + H2O = selenophosphate + AMP + phosphate + 2 H(+). In terms of biological role, synthesizes selenophosphate from selenide and ATP. This chain is Selenide, water dikinase, found in Dechloromonas aromatica (strain RCB).